Reading from the N-terminus, the 67-residue chain is Small ribosomal subunit protein bS21 (67 aa).

It belongs to the bacterial ribosomal protein bS21 family.

This chain is Small ribosomal subunit protein bS21, found in Nitratidesulfovibrio vulgaris (strain DSM 19637 / Miyazaki F) (Desulfovibrio vulgaris).